The chain runs to 64 residues: Large ribosomal subunit protein bL35 (64 aa).

It belongs to the bacterial ribosomal protein bL35 family.

This Chlorobium limicola (strain DSM 245 / NBRC 103803 / 6330) protein is Large ribosomal subunit protein bL35.